Here is a 334-residue protein sequence, read N- to C-terminus: Transaldolase (334 aa).

The active-site Schiff-base intermediate with substrate is the lysine 136.

Belongs to the transaldolase family. Type 1 subfamily. As to quaternary structure, homodimer.

Its subcellular location is the cytoplasm. The enzyme catalyses D-sedoheptulose 7-phosphate + D-glyceraldehyde 3-phosphate = D-erythrose 4-phosphate + beta-D-fructose 6-phosphate. Its pathway is carbohydrate degradation; pentose phosphate pathway; D-glyceraldehyde 3-phosphate and beta-D-fructose 6-phosphate from D-ribose 5-phosphate and D-xylulose 5-phosphate (non-oxidative stage): step 2/3. Transaldolase is important for the balance of metabolites in the pentose-phosphate pathway. This chain is Transaldolase, found in Nostoc punctiforme (strain ATCC 29133 / PCC 73102).